A 375-amino-acid chain; its full sequence is Probable UDP-N-acetylglucosamine 2-epimerase (375 aa).

The protein belongs to the UDP-N-acetylglucosamine 2-epimerase family.

It localises to the cytoplasm. The enzyme catalyses UDP-N-acetyl-alpha-D-glucosamine = UDP-N-acetyl-alpha-D-mannosamine. Its pathway is glycan metabolism; exopolysaccharide EPS I biosynthesis. May be involved in synthesis of N-acetyltrideoxygalactose, a component of exopolysaccharide EPS I which functions as a virulence factor. The protein is Probable UDP-N-acetylglucosamine 2-epimerase (epsC) of Ralstonia solanacearum (Pseudomonas solanacearum).